Reading from the N-terminus, the 156-residue chain is Adult-specific rigid cuticular protein 15.5 (156 aa).

Residues 23–84 form the Chitin-binding type R&amp;R domain; it reads IGNYAFNYGT…SVKTNEPGTA (62 aa).

Its function is as follows. Component of the rigid cuticle of the spider. This Araneus diadematus (European garden spider) protein is Adult-specific rigid cuticular protein 15.5.